A 321-amino-acid chain; its full sequence is Ribosomal RNA small subunit methyltransferase H (321 aa).

Residues 34 to 36 (GGH), D54, F80, D102, and Q109 contribute to the S-adenosyl-L-methionine site.

It belongs to the methyltransferase superfamily. RsmH family.

The protein localises to the cytoplasm. It catalyses the reaction cytidine(1402) in 16S rRNA + S-adenosyl-L-methionine = N(4)-methylcytidine(1402) in 16S rRNA + S-adenosyl-L-homocysteine + H(+). Functionally, specifically methylates the N4 position of cytidine in position 1402 (C1402) of 16S rRNA. The sequence is that of Ribosomal RNA small subunit methyltransferase H from Blochmanniella floridana.